Here is a 132-residue protein sequence, read N- to C-terminus: Small ribosomal subunit protein uS8 (132 aa).

Belongs to the universal ribosomal protein uS8 family. Part of the 30S ribosomal subunit. Contacts proteins S5 and S12.

Its function is as follows. One of the primary rRNA binding proteins, it binds directly to 16S rRNA central domain where it helps coordinate assembly of the platform of the 30S subunit. The polypeptide is Small ribosomal subunit protein uS8 (Xylella fastidiosa (strain 9a5c)).